Here is a 158-residue protein sequence, read N- to C-terminus: Nuclear cap-binding protein subunit 2 (158 aa).

MRNA contacts are provided by residues Tyr-17, Tyr-40, 109–113 (RADWD), 120–124 (RQYGR), and 130–131 (QV). The region spanning 37 to 115 (CTLYVGNLSY…RVIRADWDAG (79 aa)) is the RRM domain. The disordered stretch occupies residues 123 to 158 (GRGKHGGQVRDEYRKDYDPERGGYNRAIAQKGGDRQ). The span at 130 to 145 (QVRDEYRKDYDPERGG) shows a compositional bias: basic and acidic residues.

The protein belongs to the RRM NCBP2 family. Component of the nuclear cap-binding complex (CBC), a heterodimer composed of ncbp-1 and ncbp-2 that interacts with m7GpppG-capped RNA.

The protein localises to the nucleus. Functionally, component of the cap-binding complex (CBC), which binds co-transcriptionally to the 5' cap of pre-mRNAs and is involved in various processes such as pre-mRNA splicing and RNA-mediated gene silencing (RNAi). The CBC complex is involved in miRNA-mediated RNA interference and is required for primary microRNAs (miRNAs) processing. In the CBC complex, ncbp-2 recognizes and binds capped RNAs (m7GpppG-capped RNA) but requires ncbp-1 to stabilize the movement of its N-terminal loop and lock the CBC into a high affinity cap-binding state with the cap structure. In Caenorhabditis elegans, this protein is Nuclear cap-binding protein subunit 2 (ncbp-2).